Here is a 413-residue protein sequence, read N- to C-terminus: CinA-like protein (413 aa).

The protein belongs to the CinA family.

The chain is CinA-like protein from Geotalea daltonii (strain DSM 22248 / JCM 15807 / FRC-32) (Geobacter daltonii).